Here is a 420-residue protein sequence, read N- to C-terminus: MINIPRGTQDILPNETKKWRFIEARLDELMEVYNYQEIRTPIFESTELFARGVGDSTDVVQKEMYTFKDKGDRSITLRPEGTAAVVRSYIENKMQGLPNQPIKLYYNGPMFRYERKQKGRYRQFTQFGVEAIGAENPGVDAEVLAMAMHIYQSFGLKHLKLVINSIGDIDSRHEYNEALVKHFEPVIGDFCSDCQSRLHTNPMRILDCKIDKDKEAVKTAPRITEFLNETSKQYYADVKQHLDDLGVPYVEDPNLVRGLDYYTHTAFELMIDNPNYDGAITTLCGGGRYNGLLELLDGPHQTGIGFALSIERLLLALDEENIELDTEHDFDLFIVTMGEEADRYAVKLLNDLRRNGVKADKDYLQRKVKGQMKQADRLNANYTIVIGEQELQENKINVKNMQTGESESVDLDKLVNYFKK.

This sequence belongs to the class-II aminoacyl-tRNA synthetase family. As to quaternary structure, homodimer.

It localises to the cytoplasm. The enzyme catalyses tRNA(His) + L-histidine + ATP = L-histidyl-tRNA(His) + AMP + diphosphate + H(+). This is Histidine--tRNA ligase from Staphylococcus saprophyticus subsp. saprophyticus (strain ATCC 15305 / DSM 20229 / NCIMB 8711 / NCTC 7292 / S-41).